The sequence spans 457 residues: MITREFDTIAAISTPLGEGAIGIVRLSGTDSFAIAQKIFKGKNLSEVESHTLNYGHIVDPQNQEILDEVMLGAMRSPKTFTREDIIEINTHGGIAVTNEILQLAIREGARMAEPGEFTKRAFLNGRVDLTQAEAVMDIIRAKTDKAMNNAVKQLDGSLSNLINNTRQEILNTLAQVEVNIDYPEYDDVEEMTTQLMREKTAEFEALLSNLLNTARRGKILREGISTAIIGRPNVGKSSLLNNLLREDKAIVTDIEGTTRDVIEEYVNIKGLPLKLIDTAGIRETDDLVEQIGVERSKKALQEADLVLLVLNASEPLTDQDRQLLEISKDSNRIVLLNKTDLEEKIELDLLPTDVIKISVLHNQNIDKIEERINQLFFENAGIVEQDATYLSNARHISLIEKALESLQAVNQGLEMGMPVDLLQVDMTRTWEILGEITGDAAPDELITQLFSQFCLGK.

The (6S)-5-formyl-5,6,7,8-tetrahydrofolate site is built by Arg-25, Glu-87, and Arg-126. A TrmE-type G domain is found at 223 to 377; sequence GISTAIIGRP…IEERINQLFF (155 aa). K(+) is bound at residue Asn-233. GTP contacts are provided by residues 233–238, 252–258, and 277–280; these read NVGKSS, TDIEGTT, and DTAG. Ser-237 contributes to the Mg(2+) binding site. The K(+) site is built by Thr-252, Ile-254, and Thr-257. Thr-258 provides a ligand contact to Mg(2+). Lys-457 provides a ligand contact to (6S)-5-formyl-5,6,7,8-tetrahydrofolate.

It belongs to the TRAFAC class TrmE-Era-EngA-EngB-Septin-like GTPase superfamily. TrmE GTPase family. In terms of assembly, homodimer. Heterotetramer of two MnmE and two MnmG subunits. K(+) is required as a cofactor.

It localises to the cytoplasm. In terms of biological role, exhibits a very high intrinsic GTPase hydrolysis rate. Involved in the addition of a carboxymethylaminomethyl (cmnm) group at the wobble position (U34) of certain tRNAs, forming tRNA-cmnm(5)s(2)U34. This Streptococcus sanguinis (strain SK36) protein is tRNA modification GTPase MnmE.